The chain runs to 813 residues: Cadherin-22 (813 aa).

A signal peptide spans 1 to 33 (MRPRPEGALRAGAALSPVLLFLLLLPLLGHLWA). Over 34–621 (ASTPAPSSLS…AFVMAASLSP (588 aa)) the chain is Extracellular. 5 Cadherin domains span residues 61 to 165 (WVWN…EPRF), 166 to 274 (LHGP…PPRF), 275 to 391 (PQKM…PPEF), 392 to 495 (RPPS…NPPE), and 496 to 613 (LATP…TTAF). The N-linked (GlcNAc...) asparagine glycan is linked to Asn-159. Asn-463 and Asn-609 each carry an N-linked (GlcNAc...) asparagine glycan. Residues 622–642 (GALIALLVCVLILVVLALLIL) traverse the membrane as a helical segment. At 643–813 (TLRRHHKSHL…HRGDDEAPAS (171 aa)) the chain is on the cytoplasmic side. The tract at residues 696–726 (GGDPGGGAASPPQAASSSERHSLPRGPSSPE) is disordered.

In terms of tissue distribution, predominantly expressed in brain. Abundant in olfactory bulb, cerebrum, and cerebellum, less in pons, medulla, and spinal cord. Low expression in heart. No expression in lung, liver, spleen, kidney, testis, stomach, intestine, colon, and placenta.

The protein resides in the cell membrane. Functionally, cadherins are calcium-dependent cell adhesion proteins. They preferentially interact with themselves in a homophilic manner in connecting cells; cadherins may thus contribute to the sorting of heterogeneous cell types. PB-cadherins may have a role in the morphological organization of pituitary gland and brain tissues. In Mus musculus (Mouse), this protein is Cadherin-22 (Cdh22).